A 379-amino-acid polypeptide reads, in one-letter code: MGDSRRRSLGNQPSSEAAGRSEREQDGDPRGLQSSVYESRRVTDPERQDLDNAELGPEDPEEELPPEEVAGEEFPETLDPKEALSELERVLDKDLEEDIPEISRLSISQKLPSTTMTKARKRRRRRRLMELAEPKINWQVLKDRKGRCGKGYAWISPCKMSLHFCLCWPSVYWTERFLEDTTLTITVPAVSRRVEELSRPKRFYLEYYNNNRTTPVWPIPRSSLEYRASSRLKELAAPKIRDNFWSMPMSEVSQVSRAAQMAVPSSRILQLSKPKAPATLLEEWDPVPKPKPHVSDHNRLLHLARPKAQSDKCVPDRDPRWEVLDVTKKVVASPRIISLAKPKVRKGLNEGYDRRPLASMSLPPPKASPEKCDQPRPGL.

A disordered region spans residues 1 to 82 (MGDSRRRSLG…EFPETLDPKE (82 aa)). 2 stretches are compositionally biased toward basic and acidic residues: residues 19–29 (GRSEREQDGDP) and 38–50 (ESRRVTDPERQDL). Acidic residues predominate over residues 56–76 (GPEDPEEELPPEEVAGEEFPE). THEG repeat units lie at residues 118 to 137 (KARKRRRRRRLMELAEPKIN), 184 to 203 (TITVPAVSRRVEELSRPKRF), 222 to 241 (SSLEYRASSRLKELAAPKIR), 258 to 277 (AAQMAVPSSRILQLSKPKAP), 290 to 309 (PKPHVSDHNRLLHLARPKAQ), and 326 to 345 (VTKKVVASPRIISLAKPKVR). Ser295 carries the phosphoserine modification. Residues 344 to 379 (VRKGLNEGYDRRPLASMSLPPPKASPEKCDQPRPGL) are disordered. Basic and acidic residues-rich tracts occupy residues 347-356 (GLNEGYDRRP) and 368-379 (SPEKCDQPRPGL).

In terms of assembly, interacts with CCT5. As to expression, testis specific.

It is found in the nucleus. Functionally, may be involved (but not essential) in spermatogenesis. This Homo sapiens (Human) protein is Sperm microtubule associated protein 2.